The following is a 121-amino-acid chain: Phosphoribosyl-ATP pyrophosphatase (121 aa).

It belongs to the PRA-PH family.

It localises to the cytoplasm. The enzyme catalyses 1-(5-phospho-beta-D-ribosyl)-ATP + H2O = 1-(5-phospho-beta-D-ribosyl)-5'-AMP + diphosphate + H(+). It functions in the pathway amino-acid biosynthesis; L-histidine biosynthesis; L-histidine from 5-phospho-alpha-D-ribose 1-diphosphate: step 2/9. This chain is Phosphoribosyl-ATP pyrophosphatase, found in Burkholderia cenocepacia (strain ATCC BAA-245 / DSM 16553 / LMG 16656 / NCTC 13227 / J2315 / CF5610) (Burkholderia cepacia (strain J2315)).